The sequence spans 1507 residues: Protein similar (1507 aa).

Residues 1-85 are disordered; sequence MVSLIDTIEA…KSRDAARCRR (85 aa). Positions 26 to 49 are enriched in low complexity; sequence SASSSSCSSSFSSSPPSSSVGSPS. Residues 72–85 are compositionally biased toward basic and acidic residues; it reads KRKEKSRDAARCRR. Residues 72–125 form the bHLH domain; it reads KRKEKSRDAARCRRSKETEIFMELSAALPLKTDDVNQLDKASVMRITIAFLKIR. 2 PAS domains span residues 167–240 and 307–377; these read NGAE…LAQK and PHPS…LSKG. The PAC domain maps to 381–422; it reads TSRYRFLGKYGGYCWILSQATIVYDKLKPQSVVCVNYVISNL. 4 disordered regions span residues 433 to 459, 541 to 588, 706 to 832, and 900 to 951; these read QQTAASEQKEQHHQAAETEKEPEKAAD, HSPG…PPPT, TCST…CSPN, and YAGN…QAAV. Basic and acidic residues predominate over residues 439-459; it reads EQKEQHHQAAETEKEPEKAAD. A compositionally biased stretch (polar residues) spans 548–559; sequence ITAQLLSGSSSG. Positions 578–588 are enriched in pro residues; that stretch reads SPAPPLTPPPT. The segment at 692–863 is ODD; it reads TCLLPEDINS…IDDDMPLLTE (172 aa). A compositionally biased stretch (polar residues) spans 706–717; that stretch reads TCSTTASGQHYQ. Low complexity-rich tracts occupy residues 718 to 745 and 754 to 777; these read SPSSSSTSAPSNTSSSNNSYANSPLSPL and SNPSHQQQQQHHNQQQQQQQQQQH. Polar residues predominate over residues 803–818; the sequence is DTSCSQHLHSPSITSK. 3 stretches are compositionally biased toward low complexity: residues 823–832, 907–918, and 926–951; these read SSLPSLCSPN, QQQQQQPQLQQQ, and SSPASTVSSLSPSPVQQHHQQQQAAV. Residues 880 to 908 are a coiled coil; it reads KEIDAIQQQLQQLQQQHHQQYAGNTGYQQ. 2 coiled-coil regions span residues 982–1054 and 1110–1162; these read AEEC…YDVQ and QLLQ…QLQQ. 3 disordered regions span residues 1204–1228, 1251–1287, and 1356–1460; these read PQQQQHGNKRHLNSATGAGNPVESK, KDPAQQQTQAAKRAGSERWQLSAESKQQKQQQQQSNS, and FGGS…KTSI. Residues 1413-1423 show a composition bias toward polar residues; it reads SSTSNSTNQAE.

As to quaternary structure, efficient DNA binding requires dimerization with another bHLH protein. Interacts with Vhl. In terms of tissue distribution, ubiquitously expressed in the embryo.

The protein resides in the cytoplasm. It localises to the nucleus. Functions as a transcriptional regulator of the adaptive response to hypoxia. Binds to core DNA sequence 5'-[AG]CGTG-3' within the hypoxia response element (HRE) of target gene promoters. This chain is Protein similar (sima), found in Drosophila melanogaster (Fruit fly).